The chain runs to 221 residues: Iron-sulfur cluster repair protein YtfE (221 aa).

This sequence belongs to the RIC family. YtfE subfamily. Homodimer.

The protein localises to the cytoplasm. Functionally, di-iron-containing protein involved in the repair of iron-sulfur clusters damaged by oxidative and nitrosative stress conditions. This Pectobacterium carotovorum subsp. carotovorum (strain PC1) protein is Iron-sulfur cluster repair protein YtfE.